A 208-amino-acid polypeptide reads, in one-letter code: Dephospho-CoA kinase (208 aa).

The region spanning 5-201 is the DPCK domain; it reads IVALTGGIGS…QRYLALAASA (197 aa). Residue 13–18 coordinates ATP; it reads GSGKST.

The protein belongs to the CoaE family.

It is found in the cytoplasm. It catalyses the reaction 3'-dephospho-CoA + ATP = ADP + CoA + H(+). The protein operates within cofactor biosynthesis; coenzyme A biosynthesis; CoA from (R)-pantothenate: step 5/5. Its function is as follows. Catalyzes the phosphorylation of the 3'-hydroxyl group of dephosphocoenzyme A to form coenzyme A. In Sodalis glossinidius (strain morsitans), this protein is Dephospho-CoA kinase.